The primary structure comprises 113 residues: Gigasin-5 (113 aa).

In terms of tissue distribution, component of the organic matrix of calcified shell layers.

The sequence is that of Gigasin-5 from Magallana gigas (Pacific oyster).